Reading from the N-terminus, the 206-residue chain is Guanylate kinase (206 aa).

The Guanylate kinase-like domain occupies 3–183; it reads GNLYILSAPS…ALTELKSILT (181 aa). 10–17 is a binding site for ATP; it reads APSGAGKS.

It belongs to the guanylate kinase family.

It is found in the cytoplasm. The catalysed reaction is GMP + ATP = GDP + ADP. Its function is as follows. Essential for recycling GMP and indirectly, cGMP. The chain is Guanylate kinase from Haemophilus ducreyi (strain 35000HP / ATCC 700724).